We begin with the raw amino-acid sequence, 129 residues long: Small ribosomal subunit protein uS12 (129 aa).

At aspartate 89 the chain carries 3-methylthioaspartic acid.

It belongs to the universal ribosomal protein uS12 family. As to quaternary structure, part of the 30S ribosomal subunit. Contacts proteins S8 and S17. May interact with IF1 in the 30S initiation complex.

In terms of biological role, with S4 and S5 plays an important role in translational accuracy. Functionally, interacts with and stabilizes bases of the 16S rRNA that are involved in tRNA selection in the A site and with the mRNA backbone. Located at the interface of the 30S and 50S subunits, it traverses the body of the 30S subunit contacting proteins on the other side and probably holding the rRNA structure together. The combined cluster of proteins S8, S12 and S17 appears to hold together the shoulder and platform of the 30S subunit. The polypeptide is Small ribosomal subunit protein uS12 (Rickettsia akari (strain Hartford)).